The primary structure comprises 295 residues: Indole-3-glycerol phosphate synthase (295 aa).

The protein belongs to the TrpC family.

It carries out the reaction 1-(2-carboxyphenylamino)-1-deoxy-D-ribulose 5-phosphate + H(+) = (1S,2R)-1-C-(indol-3-yl)glycerol 3-phosphate + CO2 + H2O. It participates in amino-acid biosynthesis; L-tryptophan biosynthesis; L-tryptophan from chorismate: step 4/5. The protein is Indole-3-glycerol phosphate synthase of Synechococcus sp. (strain CC9605).